We begin with the raw amino-acid sequence, 262 residues long: uncharacterized protein (262 aa).

Residues 1–211 (MAFHVMIIPS…LLYLLDSYLE (211 aa)) form the Radical SAM core domain. Residues Cys-13, Cys-17, and Cys-20 each coordinate [4Fe-4S] cluster.

This sequence belongs to the radical SAM superfamily. Anaerobic sulfatase-maturating enzyme family. [4Fe-4S] cluster is required as a cofactor.

This is an uncharacterized protein from Methanothermobacter thermautotrophicus (strain ATCC 29096 / DSM 1053 / JCM 10044 / NBRC 100330 / Delta H) (Methanobacterium thermoautotrophicum).